A 232-amino-acid polypeptide reads, in one-letter code: Large ribosomal subunit protein uL1 (232 aa).

The protein belongs to the universal ribosomal protein uL1 family. In terms of assembly, part of the 50S ribosomal subunit.

Functionally, binds directly to 23S rRNA. The L1 stalk is quite mobile in the ribosome, and is involved in E site tRNA release. Its function is as follows. Protein L1 is also a translational repressor protein, it controls the translation of the L11 operon by binding to its mRNA. This Azorhizobium caulinodans (strain ATCC 43989 / DSM 5975 / JCM 20966 / LMG 6465 / NBRC 14845 / NCIMB 13405 / ORS 571) protein is Large ribosomal subunit protein uL1.